A 154-amino-acid polypeptide reads, in one-letter code: Myoglobin (154 aa).

The Globin domain maps to 2 to 148 (GLSDGEWQLV…FRKDMASNYK (147 aa)). Serine 4 is modified (phosphoserine). Nitrite is bound at residue histidine 65. Histidine 65 is a binding site for O2. At threonine 68 the chain carries Phosphothreonine. Histidine 94 is a binding site for heme b.

Belongs to the globin family. As to quaternary structure, monomeric.

It is found in the cytoplasm. It localises to the sarcoplasm. It carries out the reaction Fe(III)-heme b-[protein] + nitric oxide + H2O = Fe(II)-heme b-[protein] + nitrite + 2 H(+). It catalyses the reaction H2O2 + AH2 = A + 2 H2O. In terms of biological role, monomeric heme protein which primary function is to store oxygen and facilitate its diffusion within muscle tissues. Reversibly binds oxygen through a pentacoordinated heme iron and enables its timely and efficient release as needed during periods of heightened demand. Depending on the oxidative conditions of tissues and cells, and in addition to its ability to bind oxygen, it also has a nitrite reductase activity whereby it regulates the production of bioactive nitric oxide. Under stress conditions, like hypoxia and anoxia, it also protects cells against reactive oxygen species thanks to its pseudoperoxidase activity. This Gorilla gorilla beringei (Mountain gorilla) protein is Myoglobin (MB).